The sequence spans 196 residues: Dephospho-CoA kinase (196 aa).

Residues 6–196 (AIALTGGIGT…QVERFLKTLL (191 aa)) enclose the DPCK domain. 14-19 (GTGKST) provides a ligand contact to ATP.

This sequence belongs to the CoaE family.

The protein localises to the cytoplasm. The enzyme catalyses 3'-dephospho-CoA + ATP = ADP + CoA + H(+). The protein operates within cofactor biosynthesis; coenzyme A biosynthesis; CoA from (R)-pantothenate: step 5/5. In terms of biological role, catalyzes the phosphorylation of the 3'-hydroxyl group of dephosphocoenzyme A to form coenzyme A. The polypeptide is Dephospho-CoA kinase (Helicobacter pylori (strain ATCC 700392 / 26695) (Campylobacter pylori)).